Here is a 548-residue protein sequence, read N- to C-terminus: Chaperonin GroEL (548 aa).

ATP-binding positions include 30–33, K51, 87–91, G415, 479–481, and D495; these read TLGP, DGTTT, and NAA.

The protein belongs to the chaperonin (HSP60) family. Forms a cylinder of 14 subunits composed of two heptameric rings stacked back-to-back. Interacts with the co-chaperonin GroES.

The protein resides in the cytoplasm. It catalyses the reaction ATP + H2O + a folded polypeptide = ADP + phosphate + an unfolded polypeptide.. Together with its co-chaperonin GroES, plays an essential role in assisting protein folding. The GroEL-GroES system forms a nano-cage that allows encapsulation of the non-native substrate proteins and provides a physical environment optimized to promote and accelerate protein folding. The polypeptide is Chaperonin GroEL (Proteus mirabilis (strain HI4320)).